The sequence spans 282 residues: Succinate dehydrogenase [ubiquinone] iron-sulfur subunit, mitochondrial (282 aa).

The transit peptide at 1 to 26 (MAAVVFSLRRSGPVLRLSGALQVSRG) directs the protein to the mitochondrion. In terms of domain architecture, 2Fe-2S ferredoxin-type spans 42–135 (KKFAIYRWDP…VSKIYPLPHM (94 aa)). Residues C95, C100, C103, and C115 each contribute to the [2Fe-2S] cluster site. In terms of domain architecture, 4Fe-4S ferredoxin-type spans 178–208 (DRDKLDGLYECILCACCSTSCPSYWWNADKY). Positions 188, 191, and 194 each coordinate [4Fe-4S] cluster. [3Fe-4S] cluster is bound at residue C198. W203 serves as a coordination point for a ubiquinone. 2 residues coordinate [3Fe-4S] cluster: C245 and C251. C255 contacts [4Fe-4S] cluster.

The protein belongs to the succinate dehydrogenase/fumarate reductase iron-sulfur protein family. As to quaternary structure, component of complex II composed of four subunits: the flavoprotein (FP) sdha, iron-sulfur protein (IP) sdhb, and a cytochrome b composed of sdhc and sdhd. [2Fe-2S] cluster is required as a cofactor. The cofactor is [3Fe-4S] cluster. Requires [4Fe-4S] cluster as cofactor.

The protein localises to the mitochondrion inner membrane. The enzyme catalyses a quinone + succinate = fumarate + a quinol. It carries out the reaction (R)-malate + a quinone = enol-oxaloacetate + a quinol. The catalysed reaction is (S)-malate + a quinone = enol-oxaloacetate + a quinol. The protein operates within carbohydrate metabolism; tricarboxylic acid cycle; fumarate from succinate (eukaryal route): step 1/1. Its activity is regulated as follows. Enol-oxaloacetate inhibits the succinate dehydrogenase activity. Its function is as follows. Iron-sulfur protein (IP) subunit of the succinate dehydrogenase complex (mitochondrial respiratory chain complex II), responsible for transferring electrons from succinate to ubiquinone (coenzyme Q). SDH also oxidizes malate to the non-canonical enol form of oxaloacetate, enol-oxaloacetate. Enol-oxaloacetate, which is a potent inhibitor of the succinate dehydrogenase activity, is further isomerized into keto-oxaloacetate. This chain is Succinate dehydrogenase [ubiquinone] iron-sulfur subunit, mitochondrial (sdhb), found in Xenopus laevis (African clawed frog).